The following is a 450-amino-acid chain: Tubulin alpha-2 chain (450 aa).

A GTP-binding site is contributed by Gln11. Lys40 carries the N6-acetyllysine modification. The GTP site is built by Glu71, Gly144, Thr145, Thr179, Asn206, and Asn228. Glu71 serves as a coordination point for Mg(2+). Glu254 is an active-site residue.

The protein belongs to the tubulin family. As to quaternary structure, dimer of alpha and beta chains. A typical microtubule is a hollow water-filled tube with an outer diameter of 25 nm and an inner diameter of 15 nM. Alpha-beta heterodimers associate head-to-tail to form protofilaments running lengthwise along the microtubule wall with the beta-tubulin subunit facing the microtubule plus end conferring a structural polarity. Microtubules usually have 13 protofilaments but different protofilament numbers can be found in some organisms and specialized cells. It depends on Mg(2+) as a cofactor. Undergoes a tyrosination/detyrosination cycle, the cyclic removal and re-addition of a C-terminal tyrosine residue by the enzymes tubulin tyrosine carboxypeptidase (TTCP) and tubulin tyrosine ligase (TTL), respectively. In terms of processing, acetylation of alpha chains at Lys-40 stabilizes microtubules and affects affinity and processivity of microtubule motors. This modification has a role in multiple cellular functions, ranging from cell motility, cell cycle progression or cell differentiation to intracellular trafficking and signaling.

It is found in the cytoplasm. It localises to the cytoskeleton. The catalysed reaction is GTP + H2O = GDP + phosphate + H(+). Functionally, tubulin is the major constituent of microtubules, a cylinder consisting of laterally associated linear protofilaments composed of alpha- and beta-tubulin heterodimers. Microtubules grow by the addition of GTP-tubulin dimers to the microtubule end, where a stabilizing cap forms. Below the cap, tubulin dimers are in GDP-bound state, owing to GTPase activity of alpha-tubulin. This is Tubulin alpha-2 chain from Gossypium hirsutum (Upland cotton).